Here is a 259-residue protein sequence, read N- to C-terminus: uncharacterized protein (259 aa).

An N-terminal signal peptide occupies residues 1-22; sequence MKHSKKLLLCISFLLITVFISG. Cysteine 23 is lipidated: N-palmitoyl cysteine. Cysteine 23 carries S-diacylglycerol cysteine lipidation.

It belongs to the staphylococcal tandem lipoprotein family.

It localises to the cell membrane. This is an uncharacterized protein from Staphylococcus epidermidis (strain ATCC 35984 / DSM 28319 / BCRC 17069 / CCUG 31568 / BM 3577 / RP62A).